The following is a 718-amino-acid chain: ATP-dependent RNA helicase homolog DQX1 (718 aa).

Residues 54-222 (HLESSPTGVV…WGNSPIVRVP (169 aa)) enclose the Helicase ATP-binding domain. 67 to 74 (GDPGSGKS) provides a ligand contact to ATP. Positions 167-170 (DEAQ) match the DEAQ box motif. One can recognise a Helicase C-terminal domain in the interval 245 to 447 (ACQAVLELCQ…ALMRALEDLD (203 aa)). A disordered region spans residues 690-718 (QLREGTAEPPAAATETSSPQEYGDGCVLQ). A compositionally biased stretch (low complexity) spans 696 to 708 (AEPPAAATETSSP).

Ubiquitous.

It is found in the nucleus. Might be involved in RNA metabolism; it is missing helicase motif III and may not have helicase activity. In Mus musculus (Mouse), this protein is ATP-dependent RNA helicase homolog DQX1 (Dqx1).